The sequence spans 277 residues: Nickel transport system permease protein NikC (277 aa).

Residues 1–12 are Cytoplasmic-facing; the sequence is MNFFLSSRWSVR. A helical transmembrane segment spans residues 13-33; that stretch reads LALIIIALLALIALTSQWWLP. Residues 34 to 78 are Periplasmic-facing; it reads YDPQAIDLPSRLLSPDAQHWLGTDHLGRDIFSRLMAATRVSLGSV. The region spanning 67–260 is the ABC transmembrane type-1 domain; that stretch reads LMAATRVSLG…ISVMAFNLVG (194 aa). Residues 79–99 form a helical membrane-spanning segment; the sequence is MACLLLVLTLGLVIGGSAGLI. At 100 to 120 the chain is on the cytoplasmic side; it reads GGRVDQATMRVADMFMTFPTS. The chain crosses the membrane as a helical span at residues 121 to 141; the sequence is ILSFFMVGVLGTGLTNVIIAI. The Periplasmic segment spans residues 142-183; sequence ALSHWAWYARMVRSLVISLRQREFVLASRLSGAGHVRVFVDH. The helical transmembrane segment at 184–204 threads the bilayer; that stretch reads LAGAVIPSLLVLATLDIGHMM. Over 205–207 the chain is Cytoplasmic; sequence LHV. A helical transmembrane segment spans residues 208–228; sequence AGMSFLGLGVTAPTAEWGVMI. The Periplasmic segment spans residues 229-239; it reads NDARQYIWTQP. Residues 240-260 traverse the membrane as a helical segment; sequence LQMFWPGLALFISVMAFNLVG. Residues 261–277 are Cytoplasmic-facing; it reads DALRDHLDPHLVTEHAH.

This sequence belongs to the binding-protein-dependent transport system permease family. OppBC subfamily. Probably forms a heterodimeric pore with NikB.

The protein localises to the cell inner membrane. Its function is as follows. Involved in a nickel transport system, probably translocates nickel through the bacterial inner membrane. The sequence is that of Nickel transport system permease protein NikC (nikC) from Escherichia coli O157:H7.